The following is a 101-amino-acid chain: Small ribosomal subunit protein uS14 (101 aa).

This sequence belongs to the universal ribosomal protein uS14 family. As to quaternary structure, part of the 30S ribosomal subunit. Contacts proteins S3 and S10.

Its function is as follows. Binds 16S rRNA, required for the assembly of 30S particles and may also be responsible for determining the conformation of the 16S rRNA at the A site. This is Small ribosomal subunit protein uS14 from Pseudomonas putida (strain W619).